The sequence spans 122 residues: Double-headed protease inhibitor, submandibular gland (122 aa).

Kazal-like domains lie at 10 to 70 and 71 to 121; these read GGRK…KCDI and ECPQ…QCQS. 6 disulfide bridges follow: cysteine 16-cysteine 50, cysteine 28-cysteine 47, cysteine 36-cysteine 68, cysteine 72-cysteine 101, cysteine 79-cysteine 98, and cysteine 87-cysteine 119.

The protein localises to the secreted. In terms of biological role, this inhibitor is composed of two homologous actively inhibiting halves: one which inhibits trypsin, the other which inhibits elastase. The protein is Double-headed protease inhibitor, submandibular gland of Mustela lutreola (European mink).